A 44-amino-acid polypeptide reads, in one-letter code: Photosystem I reaction center subunit IX (44 aa).

A helical membrane pass occupies residues 7–27; the sequence is YLSVAPVISTLWFGSLAGLLI.

It belongs to the PsaJ family.

Its subcellular location is the plastid. It localises to the chloroplast thylakoid membrane. Functionally, may help in the organization of the PsaE and PsaF subunits. This Ceratophyllum demersum (Rigid hornwort) protein is Photosystem I reaction center subunit IX.